The following is a 209-amino-acid chain: MKRLGADFYQMPTILLAERLLGKIFVHHEVSGRVTKGRIVETEAYLGDGDEACHAWRGMTERNHVMFGPPGHLYIYFSYGCHYLANIVSEQKGIAGAVLLRAMEPIEGIEWMQERRGTTDERALMSGPGKLTQALGLGPAHYGESLLGDICWLEEAPDIPPELIGTSPRIGISRSTDLLWRKFIAGSPYISKTQPGPPPKKRKKGLESS.

Residues 189 to 209 (YISKTQPGPPPKKRKKGLESS) are disordered. Residues 199–209 (PKKRKKGLESS) are compositionally biased toward basic residues.

The protein belongs to the DNA glycosylase MPG family.

The protein is Putative 3-methyladenine DNA glycosylase of Chlorobaculum tepidum (strain ATCC 49652 / DSM 12025 / NBRC 103806 / TLS) (Chlorobium tepidum).